Consider the following 220-residue polypeptide: Phosphatidylinositol phosphate synthase (220 aa).

2 consecutive transmembrane segments (helical) span residues 21 to 46 (LLRAGFTPDTVTIFGTAASVVAALTL) and 52 to 72 (LFWGGMAVWLFAMFDMLDGAM). Residue 29–32 (DTVT) coordinates a CDP-1,2-diacyl-sn-glycerol. Residues D66 and D69 each coordinate Mg(2+). Residues G70, R74, and T80 each coordinate a CDP-1,2-diacyl-sn-glycerol. Mg(2+) is bound by residues D87 and D91. D91 acts as the Proton acceptor in catalysis. A run of 4 helical transmembrane segments spans residues 93–110 (VADGAVFAGLVWWAAFGW), 116–134 (VVATLICMITSQVISYVKA), 154–171 (LIIVLAGAIFSGGFGVQW), and 177–194 (MWVLAVASLVTVAQRMHA).

This sequence belongs to the CDP-alcohol phosphatidyltransferase class-I family. As to quaternary structure, homodimer. The cofactor is Mg(2+).

Its subcellular location is the cell membrane. It carries out the reaction a CDP-1,2-diacyl-sn-glycerol + 1D-myo-inositol 3-phosphate = a 1,2-diacyl-sn-glycero-3-phospho-(1D-myo-inositol-3-phosphate) + CMP + H(+). The enzyme catalyses 1,2-di-(9Z-octadecenoyl)-sn-glycero-3-cytidine-5'-diphosphate + 1D-myo-inositol 3-phosphate = 1,2-di-(9Z-octadecenoyl)-sn-glycero-3-phospho-(1D-myo-inositol-3-phosphate) + CMP + H(+). Its pathway is phospholipid metabolism; phosphatidylinositol phosphate biosynthesis. Catalyzes the conjugation of the 1'-hydroxyl group of D-myo-inositol-3-phosphate (also named L-myo-inositol-1-phosphate) with a lipid tail of cytidine diphosphate diacylglycerol (CDP-DAG), forming phosphatidylinositol phosphate (PIP) and CMP. PIP is a precursor of phosphatidylinositol (PI) which is an essential lipid for mycobacteria required for formation of their cell wall. This Mycobacteroides abscessus (strain ATCC 19977 / DSM 44196 / CCUG 20993 / CIP 104536 / JCM 13569 / NCTC 13031 / TMC 1543 / L948) (Mycobacterium abscessus) protein is Phosphatidylinositol phosphate synthase.